The sequence spans 239 residues: Small ribosomal subunit protein uS3 (239 aa).

The KH type-2 domain maps to 38 to 106 (IRELIEERFK…KTFVNVVEIK (69 aa)).

This sequence belongs to the universal ribosomal protein uS3 family. As to quaternary structure, part of the 30S ribosomal subunit. Forms a tight complex with proteins S10 and S14.

Binds the lower part of the 30S subunit head. Binds mRNA in the 70S ribosome, positioning it for translation. In Elusimicrobium minutum (strain Pei191), this protein is Small ribosomal subunit protein uS3.